Reading from the N-terminus, the 357-residue chain is Actin, cytoplasmic (357 aa).

Belongs to the actin family. In terms of processing, met-1 may be removed after translation.

The protein localises to the cytoplasm. It is found in the cytoskeleton. The catalysed reaction is ATP + H2O = ADP + phosphate + H(+). In terms of biological role, actins are highly conserved proteins that are involved in various types of cell motility and are ubiquitously expressed in all eukaryotic cells. This chain is Actin, cytoplasmic, found in Oxytricha fallax.